The primary structure comprises 1591 residues: Dicer-like protein 1 (1591 aa).

Composition is skewed to basic and acidic residues over residues 1–20 and 41–52; these read MEVH…RYDD and SKPRKISERKRA. Residues 1–52 are disordered; sequence MEVHDGLKSPDKAAKSRYDDDRIDQDSEDEAVRLVANPDPSKPRKISERKRA. Residues 115 to 298 enclose the Helicase ATP-binding domain; sequence LFERAKQKNT…SYERATHELE (184 aa). An ATP-binding site is contributed by 128 to 135; the sequence is LDTGTGKT. The DEAH box signature appears at 242–245; sequence DEAH. In terms of domain architecture, Helicase C-terminal spans 439–607; it reads KLIEILAECF…CLSLPKDRIM (169 aa). Residues 639 to 729 form the Dicer dsRNA-binding fold domain; it reads SLVVLAEFVA…KSTLAKVLPA (91 aa). The PAZ domain maps to 888-1012; the sequence is TTTDRVPYNF…LVLETLLISQ (125 aa). RNase III domains lie at 1050–1190 and 1243–1406; these read IDIA…LTAQ and CSQI…VDTG. The Mg(2+) site is built by E1283, D1392, and E1395. The DRBM domain occupies 1440-1514; it reads THITSIITTQ…AKQAVAIYED (75 aa). C1452, H1485, C1526, and C1528 together coordinate Zn(2+).

The protein belongs to the helicase family. Dicer subfamily. Mg(2+) serves as cofactor. Mn(2+) is required as a cofactor.

Its function is as follows. Dicer-like endonuclease which seems not to be involved in cleaving double-stranded RNA in the RNA interference (RNAi) pathway, contrary to its DCL2 counterpart. The chain is Dicer-like protein 1 (DCL1) from Pyricularia oryzae (strain 70-15 / ATCC MYA-4617 / FGSC 8958) (Rice blast fungus).